A 687-amino-acid polypeptide reads, in one-letter code: Dictomallein (687 aa).

2 disordered regions span residues 1 to 45 and 73 to 112; these read MGNG…SRRL and TAGG…STSA. The 269-residue stretch at 233–501 folds into the Peptidase M66 domain; that stretch reads PVFGTDADVQ…QAWIASRVLA (269 aa). Histidine 393 contacts Zn(2+). Residue glutamate 394 is part of the active site. Zn(2+) contacts are provided by histidine 397 and histidine 403.

This sequence belongs to the dictomallein family. Requires Zn(2+) as cofactor.

The chain is Dictomallein (dtmL) from Burkholderia mallei (strain NCTC 10247).